The primary structure comprises 98 residues: Envelope glycoprotein N (98 aa).

A signal peptide spans 1–24; that stretch reads MVSSAGLSLTLVAALCALVAPALS. At 25 to 60 the chain is on the virion surface side; that stretch reads SIVSTEGPLPLLREESRINFWNAACAARGVPVDQPT. A helical membrane pass occupies residues 61 to 81; that stretch reads AAAVTFYICLLAVLVVALGYA. The Intravirion portion of the chain corresponds to 82–98; the sequence is TRTCTRMLHASPAGRRV.

It belongs to the herpesviridae glycoprotein N family. As to quaternary structure, interacts (via N-terminus) with gM (via N-terminus). The gM-gN heterodimer forms the gCII complex. O-glycosylated.

Its subcellular location is the virion membrane. The protein localises to the host membrane. It localises to the host Golgi apparatus. The protein resides in the host trans-Golgi network. Its function is as follows. Envelope glycoprotein necessary for proper maturation of gM and modulation of its membrane fusion activity. Also plays a critical role in virion morphogenesis. This is Envelope glycoprotein N from Suid herpesvirus 1 (SuHV-1).